The following is a 187-amino-acid chain: MVYPVVEAESRVGFGKGFARRARAAGKIPAVAYGLKRAPEHVLLPAAQMSLIMRRANALLQLKIDARESLVLIKQVQRDRIRNIIEHLDMLFVNEDDAVTIRVPLRFVGQSYAGTVTSVENYSVAVTLQVSQIPEALVVDVSGLQAGRRIFASDIALPDGALLVSPPRLLIAKVDPVRRATQEPPPD.

The protein belongs to the bacterial ribosomal protein bL25 family. CTC subfamily. As to quaternary structure, part of the 50S ribosomal subunit; part of the 5S rRNA/L5/L18/L25 subcomplex. Contacts the 5S rRNA. Binds to the 5S rRNA independently of L5 and L18.

Functionally, this is one of the proteins that binds to the 5S RNA in the ribosome where it forms part of the central protuberance. In Tropheryma whipplei (strain TW08/27) (Whipple's bacillus), this protein is Large ribosomal subunit protein bL25.